The primary structure comprises 411 residues: Dipeptidase 1 (411 aa).

An N-terminal signal peptide occupies residues 1 to 16 (MWSGWWLWPLVAVCTA). Residues H36 and D38 each coordinate Zn(2+). The N-linked (GlcNAc...) asparagine glycan is linked to N57. C87 and C170 form a disulfide bridge. E141 provides a ligand contact to Zn(2+). Position 168 (H168) interacts with substrate. H214 and H235 together coordinate Zn(2+). A disulfide bond links C242 and C274. R246 is a binding site for substrate. N279 carries N-linked (GlcNAc...) asparagine glycosylation. D304 contributes to the substrate binding site. 2 N-linked (GlcNAc...) asparagine glycosylation sites follow: N332 and N358. S385 carries GPI-anchor amidated serine lipidation. The propeptide at 386-411 (GASSLHRHWGLLLASLAPLVLCLSLL) is removed in mature form.

This sequence belongs to the metallo-dependent hydrolases superfamily. Peptidase M19 family. Homodimer; disulfide-linked. Requires Zn(2+) as cofactor. Expressed in lung and kidneys.

The protein resides in the apical cell membrane. The protein localises to the cell projection. Its subcellular location is the microvillus membrane. The catalysed reaction is an L-aminoacyl-L-amino acid + H2O = 2 an L-alpha-amino acid. The enzyme catalyses leukotriene D4 + H2O = leukotriene E4 + glycine. It carries out the reaction a beta-lactam + H2O = a substituted beta-amino acid. It catalyses the reaction L-cystine-bis-glycine + 2 H2O = L-cystine + 2 glycine. The catalysed reaction is glycyldehydrophenylalanine + H2O = 2,3-didehydrophenylalanine + glycine. With respect to regulation, inhibited by L-penicillamine. Beta-lactamase activity is inhibited by cilastatin. In terms of biological role, hydrolyzes a wide range of dipeptides including the conversion of leukotriene D4 to leukotriene E4. Hydrolyzes cystinyl-bis-glycine (cys-bis-gly) formed during glutathione degradation. Also possesses beta lactamase activity and can hydrolyze the beta-lactam antibiotic imipenem. Functionally, independently of its dipeptidase activity, acts as an adhesion receptor for neutrophil recruitment from bloodstream into inflamed lungs and liver. This Homo sapiens (Human) protein is Dipeptidase 1 (DPEP1).